Consider the following 445-residue polypeptide: Phosphoglucosamine mutase (445 aa).

The Phosphoserine intermediate role is filled by serine 102. Positions 102, 241, 243, and 245 each coordinate Mg(2+). Serine 102 bears the Phosphoserine mark.

This sequence belongs to the phosphohexose mutase family. Mg(2+) serves as cofactor. Activated by phosphorylation.

The enzyme catalyses alpha-D-glucosamine 1-phosphate = D-glucosamine 6-phosphate. Catalyzes the conversion of glucosamine-6-phosphate to glucosamine-1-phosphate. The polypeptide is Phosphoglucosamine mutase (Edwardsiella ictaluri (strain 93-146)).